The sequence spans 221 residues: Molybdenum cofactor guanylyltransferase (221 aa).

Residues 18-20 (IAG), lysine 35, asparagine 63, aspartate 81, and aspartate 112 contribute to the GTP site. Aspartate 112 provides a ligand contact to Mg(2+).

Belongs to the MobA family. As to quaternary structure, monomer. Mg(2+) is required as a cofactor.

The protein resides in the cytoplasm. It catalyses the reaction Mo-molybdopterin + GTP + H(+) = Mo-molybdopterin guanine dinucleotide + diphosphate. Functionally, transfers a GMP moiety from GTP to Mo-molybdopterin (Mo-MPT) cofactor (Moco or molybdenum cofactor) to form Mo-molybdopterin guanine dinucleotide (Mo-MGD) cofactor. The sequence is that of Molybdenum cofactor guanylyltransferase from Brucella melitensis biotype 2 (strain ATCC 23457).